Reading from the N-terminus, the 1009-residue chain is Chitin synthase 2 (1009 aa).

2 stretches are compositionally biased toward polar residues: residues 1-12 and 34-62; these read MSYNNPNNSNSH and EFLN…LNFQ. Disordered regions lie at residues 1 to 62 and 175 to 234; these read MSYN…LNFQ and DESQ…EVRS. Residues 192-202 are compositionally biased toward acidic residues; sequence EGEEEEEEGET. 7 consecutive transmembrane segments (helical) span residues 647 to 667, 682 to 702, 722 to 742, 757 to 777, 804 to 823, 930 to 950, and 967 to 987; these read WLNG…KVWT, FFYQ…YFLV, ILSV…FVLS, IVIF…FMAV, LVVA…FLYF, VLVW…TGGF, and AAVF…FRFI.

It belongs to the chitin synthase family.

The protein resides in the cell membrane. It catalyses the reaction [(1-&gt;4)-N-acetyl-beta-D-glucosaminyl](n) + UDP-N-acetyl-alpha-D-glucosamine = [(1-&gt;4)-N-acetyl-beta-D-glucosaminyl](n+1) + UDP + H(+). Its function is as follows. Polymerizes chitin, a structural polymer of the cell wall and septum, by transferring the sugar moiety of UDP-GlcNAc to the non-reducing end of the growing chitin polymer. The protein is Chitin synthase 2 (CHS2) of Candida albicans (Yeast).